Here is a 774-residue protein sequence, read N- to C-terminus: Beta-xylosidase/alpha-L-arabinofuranosidase 2 (774 aa).

The signal sequence occupies residues 1–33; it reads MASVENRTPNVSVFLCFFVLFATLLLSGGRVSS. Asparagine 136 is a glycosylation site (N-linked (GlcNAc...) asparagine). Aspartate 303 is an active-site residue. An N-linked (GlcNAc...) asparagine glycan is attached at asparagine 437.

The protein belongs to the glycoside hydrolase 3 family.

The protein localises to the secreted. Its subcellular location is the extracellular space. The protein resides in the extracellular matrix. The enzyme catalyses Hydrolysis of (1-&gt;4)-beta-D-xylans, to remove successive D-xylose residues from the non-reducing termini.. It carries out the reaction Hydrolysis of terminal non-reducing alpha-L-arabinofuranoside residues in alpha-L-arabinosides.. Functionally, a bifunctional beta-xylosidase/alpha-L-arabinosidase, exo-enzyme that acts synergistically with endohydrolases. Releases xylose and arabinose from cell walls. This is Beta-xylosidase/alpha-L-arabinofuranosidase 2 from Medicago sativa subsp. varia (Alfalfa).